The primary structure comprises 287 residues: MSDNLKIGLQYLTPKHALTRLAGKLASAKMGWLTTAVIKWFIKQYNVNMDEAKNPDPEAYSTFNNFFVRELEDGARPINEDGSVISHPADACVSQFGPIMDGKLVQAKGHVYSAQELLGGDETLAAEFMGGEFATLYLSPSDYHRVHMPCDATLRKMIYVPGDLFSVNPLTAENVPNLFARNERVVCIFDTEFGPMAQILVGATIVGSIETTWAETVTPPTGPAVKTWHYPLSGDDMICFKKGEEMGRFKLGSTVINLFAPNSIKFDDSMENGIPTRMGTPFAHIVK.

Catalysis depends on charge relay system; for autoendoproteolytic cleavage activity residues Asp-90, His-147, and Ser-253. Ser-253 acts as the Schiff-base intermediate with substrate; via pyruvic acid; for decarboxylase activity in catalysis. At Ser-253 the chain carries Pyruvic acid (Ser); by autocatalysis.

This sequence belongs to the phosphatidylserine decarboxylase family. PSD-B subfamily. Prokaryotic type I sub-subfamily. As to quaternary structure, heterodimer of a large membrane-associated beta subunit and a small pyruvoyl-containing alpha subunit. The cofactor is pyruvate. In terms of processing, is synthesized initially as an inactive proenzyme. Formation of the active enzyme involves a self-maturation process in which the active site pyruvoyl group is generated from an internal serine residue via an autocatalytic post-translational modification. Two non-identical subunits are generated from the proenzyme in this reaction, and the pyruvate is formed at the N-terminus of the alpha chain, which is derived from the carboxyl end of the proenzyme. The autoendoproteolytic cleavage occurs by a canonical serine protease mechanism, in which the side chain hydroxyl group of the serine supplies its oxygen atom to form the C-terminus of the beta chain, while the remainder of the serine residue undergoes an oxidative deamination to produce ammonia and the pyruvoyl prosthetic group on the alpha chain. During this reaction, the Ser that is part of the protease active site of the proenzyme becomes the pyruvoyl prosthetic group, which constitutes an essential element of the active site of the mature decarboxylase.

Its subcellular location is the cell membrane. The catalysed reaction is a 1,2-diacyl-sn-glycero-3-phospho-L-serine + H(+) = a 1,2-diacyl-sn-glycero-3-phosphoethanolamine + CO2. The protein operates within phospholipid metabolism; phosphatidylethanolamine biosynthesis; phosphatidylethanolamine from CDP-diacylglycerol: step 2/2. Functionally, catalyzes the formation of phosphatidylethanolamine (PtdEtn) from phosphatidylserine (PtdSer). In Aliivibrio fischeri (strain MJ11) (Vibrio fischeri), this protein is Phosphatidylserine decarboxylase proenzyme.